We begin with the raw amino-acid sequence, 335 residues long: Phosphatidate cytidylyltransferase, mitochondrial (335 aa).

Belongs to the TAM41 family. Mg(2+) serves as cofactor.

It is found in the mitochondrion inner membrane. It carries out the reaction a 1,2-diacyl-sn-glycero-3-phosphate + CTP + H(+) = a CDP-1,2-diacyl-sn-glycerol + diphosphate. It functions in the pathway phospholipid metabolism; CDP-diacylglycerol biosynthesis; CDP-diacylglycerol from sn-glycerol 3-phosphate: step 3/3. Functionally, catalyzes the conversion of phosphatidic acid (PA) to CDP-diacylglycerol (CDP-DAG), an essential intermediate in the synthesis of phosphatidylglycerol, cardiolipin and phosphatidylinositol. The polypeptide is Phosphatidate cytidylyltransferase, mitochondrial (TAMM41) (Bos taurus (Bovine)).